The sequence spans 244 residues: 5-oxoprolinase subunit A (244 aa).

It belongs to the LamB/PxpA family. In terms of assembly, forms a complex composed of PxpA, PxpB and PxpC.

The catalysed reaction is 5-oxo-L-proline + ATP + 2 H2O = L-glutamate + ADP + phosphate + H(+). Functionally, catalyzes the cleavage of 5-oxoproline to form L-glutamate coupled to the hydrolysis of ATP to ADP and inorganic phosphate. The polypeptide is 5-oxoprolinase subunit A (Shigella flexneri serotype 5b (strain 8401)).